Reading from the N-terminus, the 633-residue chain is Replication protein E1 (633 aa).

The Nuclear localization signal signature appears at Lys84–Lys86. Residues Ser90, Ser94, and Ser108 each carry the phosphoserine; by host modification. The short motif at Leu107–Leu116 is the Nuclear export signal element. Positions Asn148–Thr168 are disordered. A compositionally biased stretch (polar residues) spans Asp158 to Thr168. Residues Thr169–Asp335 are DNA-binding region. The 151-residue stretch at Val434–Val584 folds into the SF3 helicase domain. Gly460–Ser467 provides a ligand contact to ATP. Lys541 participates in a covalent cross-link: Glycyl lysine isopeptide (Lys-Gly) (interchain with G-Cter in SUMO). The tract at residues Asp609–Ile633 is disordered.

This sequence belongs to the papillomaviridae E1 protein family. As to quaternary structure, can form hexamers. Interacts with E2 protein; this interaction increases E1 DNA binding specificity. Interacts with host DNA polymerase subunit POLA2. Interacts with host single stranded DNA-binding protein RPA1. Interacts with host TOP1; this interaction stimulates the enzymatic activity of TOP1. In terms of processing, phosphorylated. Sumoylated.

Its subcellular location is the host nucleus. It carries out the reaction Couples ATP hydrolysis with the unwinding of duplex DNA by translocating in the 3'-5' direction.. It catalyses the reaction ATP + H2O = ADP + phosphate + H(+). ATP-dependent DNA 3'-5' helicase required for initiation of viral DNA replication. It forms a complex with the viral E2 protein. The E1-E2 complex binds to the replication origin which contains binding sites for both proteins. During the initial step, a dimer of E1 interacts with a dimer of protein E2 leading to a complex that binds the viral origin of replication with high specificity. Then, a second dimer of E1 displaces the E2 dimer in an ATP-dependent manner to form the E1 tetramer. Following this, two E1 monomers are added to each half of the site, which results in the formation of two E1 trimers on the viral ori. Subsequently, two hexamers will be created. The double hexamer acts as a bi-directional helicase machinery and unwinds the viral DNA and then recruits the host DNA polymerase to start replication. The polypeptide is Replication protein E1 (Homo sapiens (Human)).